The following is a 319-amino-acid chain: Formimidoylglutamase (319 aa).

The Mn(2+) site is built by His-127, Asp-150, His-152, Asp-154, Asp-242, and Asp-244.

This sequence belongs to the arginase family. Mn(2+) serves as cofactor.

It carries out the reaction N-formimidoyl-L-glutamate + H2O = formamide + L-glutamate. It participates in amino-acid degradation; L-histidine degradation into L-glutamate; L-glutamate from N-formimidoyl-L-glutamate (hydrolase route): step 1/1. Functionally, catalyzes the conversion of N-formimidoyl-L-glutamate to L-glutamate and formamide. The protein is Formimidoylglutamase of Halalkalibacterium halodurans (strain ATCC BAA-125 / DSM 18197 / FERM 7344 / JCM 9153 / C-125) (Bacillus halodurans).